Here is a 104-residue protein sequence, read N- to C-terminus: Large ribosomal subunit protein uL24 (104 aa).

Belongs to the universal ribosomal protein uL24 family. As to quaternary structure, part of the 50S ribosomal subunit.

One of two assembly initiator proteins, it binds directly to the 5'-end of the 23S rRNA, where it nucleates assembly of the 50S subunit. Its function is as follows. One of the proteins that surrounds the polypeptide exit tunnel on the outside of the subunit. In Escherichia coli O81 (strain ED1a), this protein is Large ribosomal subunit protein uL24.